A 186-amino-acid chain; its full sequence is Small ribosomal subunit protein uS5 (186 aa).

The S5 DRBM domain maps to 20-83; that stretch reads FVDKLVHINR…EAAKRDMIFV (64 aa).

Belongs to the universal ribosomal protein uS5 family. As to quaternary structure, part of the 30S ribosomal subunit. Contacts proteins S4 and S8.

Functionally, with S4 and S12 plays an important role in translational accuracy. Its function is as follows. Located at the back of the 30S subunit body where it stabilizes the conformation of the head with respect to the body. The protein is Small ribosomal subunit protein uS5 of Brucella anthropi (strain ATCC 49188 / DSM 6882 / CCUG 24695 / JCM 21032 / LMG 3331 / NBRC 15819 / NCTC 12168 / Alc 37) (Ochrobactrum anthropi).